We begin with the raw amino-acid sequence, 354 residues long: Transcription factor BHLH3 (354 aa).

A disordered region spans residues 124–143 (VAEEETSGDKALLHGGGGSS). Residues 178–191 (GTPSKNLMAERRRR) form a basic motif region. The bHLH domain occupies 178-227 (GTPSKNLMAERRRRKRLNDRLSMLRSIVPKISKMDRTSILGDTIDYVKEL). The interval 192 to 227 (KRLNDRLSMLRSIVPKISKMDRTSILGDTIDYVKEL) is helix-loop-helix motif.

Belongs to the bHLH protein family. In terms of assembly, interacts with LAX1. In terms of processing, phosphorylated by MAPK3 and MAPK6.

It is found in the nucleus. The protein localises to the cytoplasm. Functionally, transcription factor involved in defense responses that functions downstream of RAC1 and upstream of PAL1 and WRKY19 genes. The chain is Transcription factor BHLH3 from Oryza sativa subsp. japonica (Rice).